Here is a 31-residue protein sequence, read N- to C-terminus: Nemertide alpha-2 (31 aa).

Cystine bridges form between Cys2–Cys16, Cys9–Cys20, and Cys15–Cys26. 4-hydroxyproline is present on residues Pro28 and Pro29.

Belongs to the nemertide family. Confined to the epidermis and to the mucus layer.

It localises to the secreted. Its function is as follows. Toxin with similar potency against both insect and mammalian sodium channels (Nav). Delays the inactivation of most Nav channels tested (B.germanica (BgNav1); EC(50)=87.2 nM, human Nav1.1/SCN1A; EC(50)=125.8 nM, rat Nav1.2/SCN2A; EC(50)=97.9 nM, rat Nav1.3/SCN3A; EC(50)=127.7 nM, rat Nav1.4/SCN4A; EC(50)=1150.3 nM, human Nav1.5/SCN5A; EC(50)=149.2 nM, mouse Nav1.6/SCN8A; EC(50)=1361.8 nM, human Nav1.9/SCN9A; EC(50)=1296.7 nM). Inactivation is completely prevented by a concentration of 1 uM, resulting in sustained, non-inactivating current. In addition, the toxin significantly enhances the recovery from inactivation, and the open state is not required for the toxin to interact with the channel. In vivo, injection into brine shrimp (Artemia salina) stops movement or causes death after 24 hours (EC(50)=2.9 uM). This chain is Nemertide alpha-2, found in Lineus longissimus (Bootlace worm).